Consider the following 107-residue polypeptide: Ferredoxin-6 (107 aa).

One can recognise a 2Fe-2S ferredoxin-type domain in the interval 2–106; the sequence is AKIIFIEHNG…GLVVHLPEKQ (105 aa). The [2Fe-2S] cluster site is built by cysteine 40, cysteine 46, cysteine 49, and cysteine 87.

It belongs to the adrenodoxin/putidaredoxin family. Requires [2Fe-2S] cluster as cofactor.

Ferredoxins are small electron carrier proteins that participate in various redox reactions. FdVI is an essential protein required for growth of R.capsulatus. May be involved in Fe-S cluster assembly. The sequence is that of Ferredoxin-6 from Rhodobacter capsulatus (Rhodopseudomonas capsulata).